A 731-amino-acid chain; its full sequence is Anaphase-promoting complex subunit 2 (731 aa).

It belongs to the cullin family. As to quaternary structure, the APC/C is probably composed of at least 12 subunits: apc-2, apc-10, apc-11, cdc-26, emb-1, emb-27, emb-30, mat-1, mat-2, mat-3, such-1 and gfi-3.

It participates in protein modification; protein ubiquitination. In terms of biological role, probable component of the anaphase promoting complex/cyclosome (APC/C), a cell cycle-regulated ubiquitin ligase that controls progression through mitosis and the G1 phase of the cell cycle. The APC/C complex acts by mediating ubiquitination and subsequent degradation of target proteins. Developmental role in early embryogenesis and the metaphase to anaphase transition in meiosis and mitosis. The sequence is that of Anaphase-promoting complex subunit 2 from Caenorhabditis elegans.